A 530-amino-acid polypeptide reads, in one-letter code: Phosphoenolpyruvate carboxykinase (ATP) (530 aa).

The substrate site is built by R58, Y195, and K201. ATP contacts are provided by residues K201, H220, and 236–244 (GLSGTGKTT). Residues K201 and H220 each contribute to the Mn(2+) site. A Mn(2+)-binding site is contributed by D257. ATP is bound by residues E285, R321, 440-441 (RI), and T446. A substrate-binding site is contributed by R321.

Belongs to the phosphoenolpyruvate carboxykinase (ATP) family. Requires Mn(2+) as cofactor.

It localises to the cytoplasm. The catalysed reaction is oxaloacetate + ATP = phosphoenolpyruvate + ADP + CO2. It functions in the pathway carbohydrate biosynthesis; gluconeogenesis. Involved in the gluconeogenesis. Catalyzes the conversion of oxaloacetate (OAA) to phosphoenolpyruvate (PEP) through direct phosphoryl transfer between the nucleoside triphosphate and OAA. This chain is Phosphoenolpyruvate carboxykinase (ATP), found in Staphylococcus aureus (strain bovine RF122 / ET3-1).